We begin with the raw amino-acid sequence, 471 residues long: Alpha-1,3/1,6-mannosyltransferase alg-2 (471 aa).

2 N-linked (GlcNAc...) asparagine glycosylation sites follow: Asn178 and Asn279. The helical transmembrane segment at 446–466 (GMILLVVGAAVAAVAGVISAV) threads the bilayer.

Belongs to the glycosyltransferase group 1 family. Glycosyltransferase 4 subfamily.

The protein resides in the endoplasmic reticulum membrane. The enzyme catalyses a beta-D-Man-(1-&gt;4)-beta-D-GlcNAc-(1-&gt;4)-alpha-D-GlcNAc-diphospho-di-trans,poly-cis-dolichol + GDP-alpha-D-mannose = an alpha-D-Man-(1-&gt;3)-beta-D-Man-(1-&gt;4)-beta-D-GlcNAc-(1-&gt;4)-alpha-D-GlcNAc-diphospho-di-trans,poly-cis-dolichol + GDP + H(+). The catalysed reaction is an alpha-D-Man-(1-&gt;3)-beta-D-Man-(1-&gt;4)-beta-D-GlcNAc-(1-&gt;4)-alpha-D-GlcNAc-diphospho-di-trans,poly-cis-dolichol + GDP-alpha-D-mannose = an alpha-D-Man-(1-&gt;3)-[alpha-D-Man-(1-&gt;6)]-beta-D-Man-(1-&gt;4)-beta-D-GlcNAc-(1-&gt;4)-alpha-D-GlcNAc-diphospho-di-trans,poly-cis-dolichol + GDP + H(+). Its pathway is protein modification; protein glycosylation. In terms of biological role, mannosylates Man(2)GlcNAc(2)-dolichol diphosphate and Man(1)GlcNAc(2)-dolichol diphosphate to form Man(3)GlcNAc(2)-dolichol diphosphate. The protein is Alpha-1,3/1,6-mannosyltransferase alg-2 (alg-2) of Neurospora crassa (strain ATCC 24698 / 74-OR23-1A / CBS 708.71 / DSM 1257 / FGSC 987).